The following is a 170-amino-acid chain: CFA/I fimbrial subunit B (170 aa).

The signal sequence occupies residues 1–23 (MKFKKTIGAMALTTMFVAVSASA).

It belongs to the fimbrial CS1 protein family. As to quaternary structure, CFA/I fimbriae are rather rigid, thread-like filaments of 0.5-1 micrometer, with an apparent axial hole, and a diameter of 7 nanometers. A single CFA/I fimbria consists of about 100 identical protein subunits.

It localises to the fimbrium. Fimbriae (also called pili), polar filaments radiating from the surface of the bacterium to a length of 0.5-1.5 micrometers and numbering 100-300 per cell, enable bacteria to colonize the epithelium of specific host organs. The polypeptide is CFA/I fimbrial subunit B (cfaB) (Escherichia coli O78:H11 (strain H10407 / ETEC)).